A 172-amino-acid chain; its full sequence is Outer-membrane lipoprotein carrier protein (172 aa).

Positions 1–16 are cleaved as a signal peptide; that stretch reads MRIALLWVAFGALALA.

It belongs to the LolA family. Monomer.

It is found in the periplasm. Participates in the translocation of lipoproteins from the inner membrane to the outer membrane. Only forms a complex with a lipoprotein if the residue after the N-terminal Cys is not an aspartate (The Asp acts as a targeting signal to indicate that the lipoprotein should stay in the inner membrane). This Wolinella succinogenes (strain ATCC 29543 / DSM 1740 / CCUG 13145 / JCM 31913 / LMG 7466 / NCTC 11488 / FDC 602W) (Vibrio succinogenes) protein is Outer-membrane lipoprotein carrier protein.